The primary structure comprises 499 residues: UDP-N-acetylmuramoylalanine--D-glutamate ligase (499 aa).

129–135 contacts ATP; it reads GTNGKTT.

Belongs to the MurCDEF family.

The protein resides in the cytoplasm. It carries out the reaction UDP-N-acetyl-alpha-D-muramoyl-L-alanine + D-glutamate + ATP = UDP-N-acetyl-alpha-D-muramoyl-L-alanyl-D-glutamate + ADP + phosphate + H(+). It participates in cell wall biogenesis; peptidoglycan biosynthesis. Cell wall formation. Catalyzes the addition of glutamate to the nucleotide precursor UDP-N-acetylmuramoyl-L-alanine (UMA). The polypeptide is UDP-N-acetylmuramoylalanine--D-glutamate ligase (Ralstonia nicotianae (strain ATCC BAA-1114 / GMI1000) (Ralstonia solanacearum)).